A 336-amino-acid polypeptide reads, in one-letter code: N-acetylornithine carbamoyltransferase (336 aa).

Carbamoyl phosphate is bound by residues 49–52, Trp-77, and Arg-112; that span reads SMRT. Glu-144 serves as a coordination point for N(2)-acetyl-L-ornithine. Residue 148–151 participates in carbamoyl phosphate binding; sequence HPCQ. Lys-252 and Leu-295 together coordinate N(2)-acetyl-L-ornithine. 294-295 is a binding site for carbamoyl phosphate; it reads CL. An N6-carboxylysine modification is found at Lys-302. Position 322 (Arg-322) interacts with carbamoyl phosphate.

Belongs to the aspartate/ornithine carbamoyltransferase superfamily. AOTCase family. As to quaternary structure, homotrimer.

The protein resides in the cytoplasm. The enzyme catalyses N(2)-acetyl-L-ornithine + carbamoyl phosphate = N(2)-acetyl-L-citrulline + phosphate + H(+). It functions in the pathway amino-acid biosynthesis; L-arginine biosynthesis. Its activity is regulated as follows. Carboxylation at Lys-302 increases the catalytic activity of the enzyme. Its function is as follows. Catalyzes the transfer of the carbamoyl group from carbamoyl phosphate to the delta-amino group of N(2)-acetyl-L-ornithine to produce N(2)-acetyl-L-citrulline. This is a step in an alternative arginine biosynthesis pathway. The enzyme has no activity with ornithine. The sequence is that of N-acetylornithine carbamoyltransferase from Xylella fastidiosa (strain Temecula1 / ATCC 700964).